Reading from the N-terminus, the 159-residue chain is Pathogenesis-related leaf protein 6 (159 aa).

An N-terminal signal peptide occupies residues 1–24; sequence MGLFNISLLLTCLMVLAIFHSCEA. Gln25 carries the pyrrolidone carboxylic acid modification. Residues 32–147 enclose the SCP domain; the sequence is LAVHNDARAQ…NGWWFISCNY (116 aa). Cystine bridges form between Cys68-Cys136, Cys109-Cys115, and Cys131-Cys145.

This sequence belongs to the CRISP family.

In terms of biological role, probably involved in the defense reaction of plants against pathogens. Has antifungal activity. The chain is Pathogenesis-related leaf protein 6 (PR1B1) from Solanum lycopersicum (Tomato).